The chain runs to 744 residues: FNIP repeat-containing protein cigB (744 aa).

FNIP repeat units follow at residues 340–376 (FNQK…TVTT), 383–422 (FNQK…TVIL), 426–462 (FNQK…TVTR), 469–508 (FNQK…TITL), 512–550 (FNQK…TTVR), 555–594 (FNQK…TVIL), 598–635 (FNQK…VTTV), 641–678 (FNQK…VTTV), and 684–723 (FNQK…NVYI).

In Dictyostelium discoideum (Social amoeba), this protein is FNIP repeat-containing protein cigB (cigB).